The primary structure comprises 269 residues: Cytochrome c oxidase subunit 3 (269 aa).

The next 7 helical transmembrane spans lie at 24 to 44 (LFTS…MHGF), 46 to 66 (GFQY…GLWF), 90 to 110 (GVGL…WAFF), 138 to 160 (PLLN…HSLI), 167 to 187 (ALYG…FQGV), 207 to 227 (FGTG…AVGL), and 247 to 267 (ILYW…VYYW).

Belongs to the cytochrome c oxidase subunit 3 family. In terms of assembly, component of the cytochrome c oxidase (complex IV, CIV), a multisubunit enzyme composed of a catalytic core of 3 subunits and several supernumerary subunits. The complex exists as a monomer or a dimer and forms supercomplexes (SCs) in the inner mitochondrial membrane with ubiquinol-cytochrome c oxidoreductase (cytochrome b-c1 complex, complex III, CIII).

It localises to the mitochondrion inner membrane. It catalyses the reaction 4 Fe(II)-[cytochrome c] + O2 + 8 H(+)(in) = 4 Fe(III)-[cytochrome c] + 2 H2O + 4 H(+)(out). In terms of biological role, component of the cytochrome c oxidase, the last enzyme in the mitochondrial electron transport chain which drives oxidative phosphorylation. The respiratory chain contains 3 multisubunit complexes succinate dehydrogenase (complex II, CII), ubiquinol-cytochrome c oxidoreductase (cytochrome b-c1 complex, complex III, CIII) and cytochrome c oxidase (complex IV, CIV), that cooperate to transfer electrons derived from NADH and succinate to molecular oxygen, creating an electrochemical gradient over the inner membrane that drives transmembrane transport and the ATP synthase. Cytochrome c oxidase is the component of the respiratory chain that catalyzes the reduction of oxygen to water. Electrons originating from reduced cytochrome c in the intermembrane space (IMS) are transferred via the dinuclear copper A center (CU(A)) of subunit 2 and heme A of subunit 1 to the active site in subunit 1, a binuclear center (BNC) formed by heme A3 and copper B (CU(B)). The BNC reduces molecular oxygen to 2 water molecules using 4 electrons from cytochrome c in the IMS and 4 protons from the mitochondrial matrix. The protein is Cytochrome c oxidase subunit 3 (cox3) of Emericella nidulans (Aspergillus nidulans).